The following is a 517-amino-acid chain: Acyltransferase AFT15-1 (517 aa).

His-180 functions as the Proton acceptor in the catalytic mechanism.

The protein belongs to the plant acyltransferase family.

The protein operates within mycotoxin biosynthesis. In terms of biological role, acyltransferase; part of the gene clusters that mediate the biosynthesis of the host-selective toxins (HSTs) AF-toxins responsible for Alternaria black spot of strawberry disease by the strawberry pathotype. AF-toxin I and III are valine derivatives of 2,3-dyhydroxy-isovaleric acid and 2-hydroxy-isovaleric acid respectively, while AF II is an isoleucine derivative of 2-hydroxy-valeric acid. These derivatives are bound to a 9,10-epoxy-8-hydroxy-9-methyl-decatrienoic acid (EDA) moiety. On cellular level, AF-toxins affect plasma membrane of susceptible cells and cause a sudden increase in loss of K(+) after a few minutes of toxin treatment. The aldo-keto reductase AFTS1 catalyzes the conversion of 2-keto-isovaleric acid (2-KIV) to 2-hydroxy-isovaleric acid (2-HIV) by reduction of its ketone to an alcohol. The acyl-CoA ligase AFT1, the hydrolase AFT2 and the enoyl-CoA hydratases AFT3 and AFT6, but also the polyketide synthase AFT9, the acyl-CoA dehydrogenase AFT10, the cytochrome P450 monooxygenase AFT11 and the oxidoreductase AFT12 are all involved in the biosynthesis of the AK-, AF- and ACT-toxin common EDA structural moiety. The exact function of each enzyme, and of additional enzymes identified within the AF-toxin clusters have still to be determined. This Alternaria alternata (Alternaria rot fungus) protein is Acyltransferase AFT15-1 (AFT15-1).